Reading from the N-terminus, the 523-residue chain is 2-isopropylmalate synthase (523 aa).

The Pyruvate carboxyltransferase domain maps to 5-267; sequence VIIFDTTLRD…HTNINHHEIW (263 aa). The Mn(2+) site is built by D14, H202, H204, and N238. The regulatory domain stretch occupies residues 392–523; the sequence is RLDYFSVQSG…QNKENNKETV (132 aa).

Belongs to the alpha-IPM synthase/homocitrate synthase family. LeuA type 1 subfamily. In terms of assembly, homodimer. Mn(2+) is required as a cofactor.

The protein resides in the cytoplasm. It carries out the reaction 3-methyl-2-oxobutanoate + acetyl-CoA + H2O = (2S)-2-isopropylmalate + CoA + H(+). It participates in amino-acid biosynthesis; L-leucine biosynthesis; L-leucine from 3-methyl-2-oxobutanoate: step 1/4. In terms of biological role, catalyzes the condensation of the acetyl group of acetyl-CoA with 3-methyl-2-oxobutanoate (2-ketoisovalerate) to form 3-carboxy-3-hydroxy-4-methylpentanoate (2-isopropylmalate). The protein is 2-isopropylmalate synthase of Salmonella agona (strain SL483).